The primary structure comprises 389 residues: MLSVRIPLAPITNPQQLQLSPLKGLSLVDKENTPPALSGARVLASKTARRIFQEPAEPKTKAAAPGVEDEPLLRENPRRFVIFPIEYHDIWQMYKKAEASFWTAEEVDLSKDIQHWESLKPEERYFISHVLAFFAASDGIVNENLVERFSQEVQITEARCFYGFQIAMENIHSEMYSLLIDTYIKDPKEREFLFNAIETMPCVEKKADWALRWIGDKEATYGERVVAFAAVEGIFFSGSFASIFWLKKRGLMPGLTFSNELISRDEGLHCDFACLMFKHLVHKPSEERVREIIINAVRVEQEFLTEALPVKLIGMNCTLMKQYIEFVADRLMLELGFSKVFRVENPFDFMENISLEGKTNFFEKRVGEYQRMGVMSSPTENSFTLDADF.

Phosphoserine is present on S20. T33 carries the post-translational modification Phosphothreonine. Positions 49–51 (RRI) match the Cy motif. Positions 138, 169, and 172 each coordinate Fe cation. Y176 is a catalytic residue. Residues E232, E266, and H269 each contribute to the Fe cation site.

The protein belongs to the ribonucleoside diphosphate reductase small chain family. As to quaternary structure, heterodimer of a large and a small subunit. Interacts (via Cy motif and when phosphorylated at Thr-33) with CCNF; the interaction occurs exclusively in G2 and early M. Fe cation is required as a cofactor. Post-translationally, phosphorylation on Ser-20 relieves the inhibitory effect on Wnt signaling. Phosphorylated on Thr-33 by CDK1 and CDK2; predominantly in G2 and M phase. Ubiquitinated by the SCF(CCNF) E3 ubiquitin-protein ligase complex; leading to its degradation by the proteasome.

Its subcellular location is the cytoplasm. It localises to the nucleus. It carries out the reaction a 2'-deoxyribonucleoside 5'-diphosphate + [thioredoxin]-disulfide + H2O = a ribonucleoside 5'-diphosphate + [thioredoxin]-dithiol. Functionally, provides the precursors necessary for DNA synthesis. Catalyzes the biosynthesis of deoxyribonucleotides from the corresponding ribonucleotides. Inhibits Wnt signaling. The protein is Ribonucleoside-diphosphate reductase subunit M2 (RRM2) of Macaca fascicularis (Crab-eating macaque).